The primary structure comprises 517 residues: Protein ERGIC-53 (517 aa).

The first 30 residues, 1–30, serve as a signal peptide directing secretion; that stretch reads MAVSRRRGPQAGAQSFFCALLLSFSQFVGS. The Lumenal segment spans residues 31-484; sequence DGMGGDAAAP…DLPAFPSCLS (454 aa). One can recognise an L-type lectin-like domain in the interval 52–275; sequence RRFEYKYSFK…DVLSFLTFQL (224 aa). A carbohydrate contacts are provided by serine 96 and aspartate 129. Ca(2+) is bound by residues aspartate 160, phenylalanine 162, aspartate 163, asparagine 164, aspartate 165, asparagine 169, and asparagine 170. A carbohydrate is bound at residue asparagine 164. Residue histidine 186 participates in a carbohydrate binding. A Ca(2+)-binding site is contributed by aspartate 189. A disulfide bridge connects residues cysteine 198 and cysteine 238. A carbohydrate is bound at residue 259–261; that stretch reads GGL. Disordered stretches follow at residues 276–297 and 377–396; these read TEPG…KEKY and EISR…SQQE. The segment covering 278-297 has biased composition (basic and acidic residues); the sequence is PGKEPPTPEKDISEKEKEKY. Serine 433 is modified (phosphoserine). Residues 485-505 traverse the membrane as a helical segment; sequence TVHFVIFIVVQTVLFIGYIMY. Residues 506 to 517 lie on the Cytoplasmic side of the membrane; the sequence is RTQQEAAAKKFF. The tract at residues 506–517 is mediates interaction with RAB3GAP1, RAB3GAP2 and UBXN6; the sequence is RTQQEAAAKKFF. Positions 516–517 match the ER export motif motif; that stretch reads FF.

Exists both as a covalent disulfide-linked homohexamer, and a complex of three disulfide-linked dimers non-covalently kept together. Interacts with MCFD2. May interact with TMEM115. Interacts with RAB3GAP1 and RAB3GAP2. Interacts with UBXN6. Interacts with SERPINA1/alpha1-antitrypsin. Interacts with BET1.

It localises to the endoplasmic reticulum-Golgi intermediate compartment membrane. It is found in the golgi apparatus membrane. Its subcellular location is the endoplasmic reticulum membrane. Its function is as follows. Mannose-specific lectin. May recognize sugar residues of glycoproteins, glycolipids, or glycosylphosphatidyl inositol anchors and may be involved in the sorting or recycling of proteins, lipids, or both. The LMAN1-MCFD2 complex forms a specific cargo receptor for the ER-to-Golgi transport of selected proteins. The sequence is that of Protein ERGIC-53 (Lman1) from Rattus norvegicus (Rat).